The primary structure comprises 216 residues: Pyrophosphatase PpaX (216 aa).

D9 (nucleophile) is an active-site residue.

This sequence belongs to the HAD-like hydrolase superfamily. PpaX family. The cofactor is Mg(2+).

It carries out the reaction diphosphate + H2O = 2 phosphate + H(+). Its function is as follows. Hydrolyzes pyrophosphate formed during P-Ser-HPr dephosphorylation by HPrK/P. Might play a role in controlling the intracellular pyrophosphate pool. This chain is Pyrophosphatase PpaX, found in Bacillus cereus (strain ATCC 10987 / NRS 248).